The primary structure comprises 405 residues: MATEMALVKPISKFSTSSPIFSNSRYGKFTTVRMSSTSQSTTKAAAKGGKKAAKTAIKETLLTPRFYTTDFDEMEALFNTEINKNLNQSEFESLLQEFKTDYNQTHFVRNKEFKEAADKIDGPLRQIFVEFSERSCTAEFSGFLLYKELGRRLKKTNPVVAEIFSLMSRDEARHAGFLNKGLSDFNLALDLGFLTKARKYTFFKPKFIFYATYLSEKIGYWRYITIYRHLKENPEYQCYPIFKYFENWCQDENRHGDFFSALLKAQPQFLNDWKAKLWSRFFCLSVYVTMYLNDCQRTAFYEGIGLDTKEFDMHVIIETNRTTARIFPAVLDVENPEFKRRLDKMVEINEQLLAVGETSDIPLVKNLKRIPLIAALASELLATYLMPPIESGSVDFAEFEPQLVY.

The transit peptide at 1-43 directs the protein to the chloroplast; that stretch reads MATEMALVKPISKFSTSSPIFSNSRYGKFTTVRMSSTSQSTTK.

It belongs to the AcsF family. Fe cation serves as cofactor.

It localises to the plastid. The protein resides in the chloroplast. The catalysed reaction is Mg-protoporphyrin IX 13-monomethyl ester + 3 NADPH + 3 O2 + 2 H(+) = 3,8-divinyl protochlorophyllide a + 3 NADP(+) + 5 H2O. The protein operates within porphyrin-containing compound metabolism; chlorophyll biosynthesis. Catalyzes the formation of the isocyclic ring in chlorophyll biosynthesis. Mediates the cyclase reaction, which results in the formation of divinylprotochlorophyllide (Pchlide) characteristic of all chlorophylls from magnesium-protoporphyrin IX 13-monomethyl ester (MgPMME). This Gossypium hirsutum (Upland cotton) protein is Magnesium-protoporphyrin IX monomethyl ester [oxidative] cyclase, chloroplastic (CRD1).